Consider the following 591-residue polypeptide: PDZ and LIM domain protein 5 (591 aa).

Ser2 is subject to N-acetylserine. The residue at position 2 (Ser2) is a Phosphoserine. Positions 2–85 constitute a PDZ domain; it reads SNYNVSLVGP…SLNMTLQRAS (84 aa). Position 89 is an N6-acetyllysine; alternate (Lys89). Lys89 carries the N6-succinyllysine; alternate modification. A Glycyl lysine isopeptide (Lys-Gly) (interchain with G-Cter in SUMO2); alternate cross-link involves residue Lys89. Phosphoserine is present on residues Ser111, Ser134, and Ser137. Disordered stretches follow at residues 125–240 and 255–334; these read YNKV…GPPR and THSD…SNRP. Residues 134–143 are compositionally biased toward polar residues; it reads SVSSPKVTSI. The segment covering 144-161 has biased composition (low complexity); that stretch reads PSPSSAFTPAHAATSSHA. The span at 162–174 shows a compositional bias: pro residues; that stretch reads SPPPVAAVTPPPL. Polar residues-rich tracts occupy residues 183 to 195 and 207 to 217; these read ANPS…SPPN and PTVTSVCSESA. Ser228 and Ser260 each carry phosphoserine. 2 stretches are compositionally biased toward basic and acidic residues: residues 258 to 273 and 293 to 304; these read DASK…DWRP and EHLKESENDNAK. Residues 310-329 show a composition bias toward low complexity; that stretch reads PEPSQQSASPLSAAESLESP. Phosphoserine is present on residues Ser313 and Ser318. Lys346 bears the N6-acetyllysine mark. The interval 348-398 is disordered; the sequence is VGSTSVKSPSWQRPNQAAPSTGRISNSASSSGTGAPMKPAVGPPQPSDQDT. Residues 349–380 are compositionally biased toward polar residues; sequence GSTSVKSPSWQRPNQAAPSTGRISNSASSSGT. Phosphoserine is present on residues Ser355 and Ser357. LIM zinc-binding domains lie at 413–472, 472–531, and 531–591; these read PMCA…FFAP, PECG…LFGT, and TICR…SVNF.

In terms of assembly, interacts with various PKC isoforms through the LIM domains. Interacts with actin and alpha-actinin through the PDZ domain. Interacts (via LIM domains) with SIPA1L1/SPAR; this interaction may occur preferentially with isoform 1. As to expression, detected in brain, in neurons, including in hippocampal neurons, and glial cells (at protein level). Detected in heart and skeletal muscle.

It is found in the postsynaptic density. It localises to the presynapse. The protein resides in the postsynapse. Its subcellular location is the cytoplasm. The protein localises to the cytosol. May play an important role in the heart development by scaffolding PKC to the Z-disk region. May play a role in the regulation of cardiomyocyte expansion. Isoforms lacking the LIM domains may negatively modulate the scaffolding activity of isoform 1. Overexpression promotes the development of heart hypertrophy. Contributes to the regulation of dendritic spine morphogenesis in neurons. May be required to restrain postsynaptic growth of excitatory synapses. Isoform 1, but not isoform 2, expression favors spine thinning and elongation. In Rattus norvegicus (Rat), this protein is PDZ and LIM domain protein 5 (Pdlim5).